The sequence spans 277 residues: Thymidylate synthase (277 aa).

DUMP is bound at residue Arg21. His51 is a (6R)-5,10-methylene-5,6,7,8-tetrahydrofolate binding site. Position 126–127 (126–127 (RR)) interacts with dUMP. Cys159 (nucleophile) is an active-site residue. DUMP is bound by residues 179–182 (RSAD), Asn190, and 220–222 (HLY). Asp182 contributes to the (6R)-5,10-methylene-5,6,7,8-tetrahydrofolate binding site. Ala276 serves as a coordination point for (6R)-5,10-methylene-5,6,7,8-tetrahydrofolate.

Belongs to the thymidylate synthase family. Bacterial-type ThyA subfamily. In terms of assembly, homodimer.

Its subcellular location is the cytoplasm. The catalysed reaction is dUMP + (6R)-5,10-methylene-5,6,7,8-tetrahydrofolate = 7,8-dihydrofolate + dTMP. Its pathway is pyrimidine metabolism; dTTP biosynthesis. In terms of biological role, catalyzes the reductive methylation of 2'-deoxyuridine-5'-monophosphate (dUMP) to 2'-deoxythymidine-5'-monophosphate (dTMP) while utilizing 5,10-methylenetetrahydrofolate (mTHF) as the methyl donor and reductant in the reaction, yielding dihydrofolate (DHF) as a by-product. This enzymatic reaction provides an intracellular de novo source of dTMP, an essential precursor for DNA biosynthesis. The sequence is that of Thymidylate synthase from Thioalkalivibrio sulfidiphilus (strain HL-EbGR7).